The chain runs to 569 residues: Proline--tRNA ligase (569 aa).

It belongs to the class-II aminoacyl-tRNA synthetase family. ProS type 1 subfamily. In terms of assembly, homodimer.

The protein resides in the cytoplasm. It carries out the reaction tRNA(Pro) + L-proline + ATP = L-prolyl-tRNA(Pro) + AMP + diphosphate. Catalyzes the attachment of proline to tRNA(Pro) in a two-step reaction: proline is first activated by ATP to form Pro-AMP and then transferred to the acceptor end of tRNA(Pro). As ProRS can inadvertently accommodate and process non-cognate amino acids such as alanine and cysteine, to avoid such errors it has two additional distinct editing activities against alanine. One activity is designated as 'pretransfer' editing and involves the tRNA(Pro)-independent hydrolysis of activated Ala-AMP. The other activity is designated 'posttransfer' editing and involves deacylation of mischarged Ala-tRNA(Pro). The misacylated Cys-tRNA(Pro) is not edited by ProRS. This Colwellia psychrerythraea (strain 34H / ATCC BAA-681) (Vibrio psychroerythus) protein is Proline--tRNA ligase.